The primary structure comprises 236 residues: Auxin-responsive protein IAA13 (236 aa).

Disordered stretches follow at residues 1-24 (MAGA…GGAA), 52-93 (EAAA…WPPV), and 105-130 (SVKS…GSNS). The EAR-like (transcriptional repression) motif lies at 12-16 (LRLGL). Over residues 52–61 (EAAAGKAEAP) the composition is skewed to low complexity. Residues 62 to 81 (AAEKAKRPAEAAAADAEKPP) show a composition bias toward basic and acidic residues. Residues 117-130 (QQQQPAANASGSNS) show a composition bias toward low complexity. A PB1 domain is found at 131 to 218 (SAFVKVSMDG…SCKRLRIMKG (88 aa)).

This sequence belongs to the Aux/IAA family. Homodimers and heterodimers.

It is found in the nucleus. Its function is as follows. Aux/IAA proteins are short-lived transcriptional factors that function as repressors of early auxin response genes at low auxin concentrations. The polypeptide is Auxin-responsive protein IAA13 (IAA13) (Oryza sativa subsp. japonica (Rice)).